The sequence spans 93 residues: Large ribosomal subunit protein uL23 (93 aa).

It belongs to the universal ribosomal protein uL23 family. As to quaternary structure, part of the 50S ribosomal subunit. Contacts protein L29, and trigger factor when it is bound to the ribosome.

In terms of biological role, one of the early assembly proteins it binds 23S rRNA. One of the proteins that surrounds the polypeptide exit tunnel on the outside of the ribosome. Forms the main docking site for trigger factor binding to the ribosome. This chain is Large ribosomal subunit protein uL23, found in Campylobacter jejuni subsp. jejuni serotype O:6 (strain 81116 / NCTC 11828).